Consider the following 205-residue polypeptide: dITP/XTP pyrophosphatase (205 aa).

Residue 7–12 participates in substrate binding; sequence SNNRGK. Residues Glu39 and Asp68 each coordinate Mg(2+). The Proton acceptor role is filled by Asp68. Substrate contacts are provided by residues Ala69, 154 to 157, Lys177, and 182 to 183; these read FGFD and HR.

Belongs to the HAM1 NTPase family. In terms of assembly, homodimer. It depends on Mg(2+) as a cofactor.

The enzyme catalyses XTP + H2O = XMP + diphosphate + H(+). It carries out the reaction dITP + H2O = dIMP + diphosphate + H(+). It catalyses the reaction ITP + H2O = IMP + diphosphate + H(+). In terms of biological role, pyrophosphatase that catalyzes the hydrolysis of nucleoside triphosphates to their monophosphate derivatives, with a high preference for the non-canonical purine nucleotides XTP (xanthosine triphosphate), dITP (deoxyinosine triphosphate) and ITP. Seems to function as a house-cleaning enzyme that removes non-canonical purine nucleotides from the nucleotide pool, thus preventing their incorporation into DNA/RNA and avoiding chromosomal lesions. This chain is dITP/XTP pyrophosphatase, found in Acidovorax ebreus (strain TPSY) (Diaphorobacter sp. (strain TPSY)).